The sequence spans 200 residues: MALQETIEQTVTGLGYELVEIERTGGGLLRVTIDMPYVSGAEQFINAEDCEKVTRQLQFVLEVEGADYSRLEVSSPGIDRPLRNEKDFERFAGELVDITLKAPIGVAASAGSAVSANRKKFRGTLERAAPKDGVAGWQIVWSDEPPVKPGQKVSKKKLPAPLQALGFTLDEIHQARLAPVVDFKGRKPKIVPGADKSSEK.

The protein belongs to the RimP family.

It is found in the cytoplasm. In terms of biological role, required for maturation of 30S ribosomal subunits. This chain is Ribosome maturation factor RimP, found in Polaromonas sp. (strain JS666 / ATCC BAA-500).